Consider the following 169-residue polypeptide: Ribosome maturation factor RimM (169 aa).

Positions 95 to 168 constitute a PRC barrel domain; sequence EGNYYIFQIV…KMKVELLEGL (74 aa).

This sequence belongs to the RimM family. As to quaternary structure, binds ribosomal protein uS19.

Its subcellular location is the cytoplasm. In terms of biological role, an accessory protein needed during the final step in the assembly of 30S ribosomal subunit, possibly for assembly of the head region. Essential for efficient processing of 16S rRNA. May be needed both before and after RbfA during the maturation of 16S rRNA. It has affinity for free ribosomal 30S subunits but not for 70S ribosomes. In Desulforamulus reducens (strain ATCC BAA-1160 / DSM 100696 / MI-1) (Desulfotomaculum reducens), this protein is Ribosome maturation factor RimM.